Reading from the N-terminus, the 656-residue chain is uncharacterized protein (656 aa).

Positions 623–656 (EIDIPGTPASIDPEWSRPPGSITDDHVFDAPLHR) are disordered. Basic and acidic residues predominate over residues 645–656 (TDDHVFDAPLHR).

This is an uncharacterized protein from Mycobacterium tuberculosis (strain CDC 1551 / Oshkosh).